A 380-amino-acid polypeptide reads, in one-letter code: Mitogen-activated protein kinase mpkC (380 aa).

The 281-residue stretch at 20 to 300 folds into the Protein kinase domain; the sequence is YVNLQPIGMG…AQDALRHPYL (281 aa). ATP is bound by residues 26-34 and Lys-49; that span reads IGMGSFGLV. Asp-141 functions as the Proton acceptor in the catalytic mechanism. The residue at position 171 (Thr-171) is a Phosphothreonine. Positions 171 to 173 match the TXY motif; it reads TGY. At Tyr-173 the chain carries Phosphotyrosine.

This sequence belongs to the protein kinase superfamily. Ser/Thr protein kinase family. MAP kinase subfamily. HOG1 sub-subfamily. It depends on Mg(2+) as a cofactor. Post-translationally, dually phosphorylated on Thr-171 and Tyr-173, which activates the enzyme.

The enzyme catalyses L-seryl-[protein] + ATP = O-phospho-L-seryl-[protein] + ADP + H(+). The catalysed reaction is L-threonyl-[protein] + ATP = O-phospho-L-threonyl-[protein] + ADP + H(+). With respect to regulation, activated by tyrosine and threonine phosphorylation. Its function is as follows. Mitogen-activated protein kinase required for growth on media where sorbitol or mannitol is the sole carbon source. The sequence is that of Mitogen-activated protein kinase mpkC (mpkC) from Aspergillus clavatus (strain ATCC 1007 / CBS 513.65 / DSM 816 / NCTC 3887 / NRRL 1 / QM 1276 / 107).